A 225-amino-acid chain; its full sequence is uncharacterized protein (225 aa).

Residues 114–219 (DAEAIIMQVY…RLSVTMRRII (106 aa)) enclose the Fe2OG dioxygenase domain.

The protein belongs to the iron/ascorbate-dependent oxidoreductase family.

Its subcellular location is the cytoplasm. The protein resides in the nucleus. This is an uncharacterized protein from Schizosaccharomyces pombe (strain 972 / ATCC 24843) (Fission yeast).